The following is a 108-amino-acid chain: Cell cycle protein GpsB (108 aa).

A coiled-coil region spans residues 32–69 (LDNVIKDYENFNAQIEALKAENEALKKAKYQARNTVSA).

Belongs to the GpsB family. In terms of assembly, forms polymers through the coiled coil domains. Interacts with PBP1, MreC and EzrA.

It is found in the cytoplasm. Functionally, divisome component that associates with the complex late in its assembly, after the Z-ring is formed, and is dependent on DivIC and PBP2B for its recruitment to the divisome. Together with EzrA, is a key component of the system that regulates PBP1 localization during cell cycle progression. Its main role could be the removal of PBP1 from the cell pole after pole maturation is completed. Also contributes to the recruitment of PBP1 to the division complex. Not essential for septum formation. In Streptococcus pyogenes serotype M49 (strain NZ131), this protein is Cell cycle protein GpsB.